We begin with the raw amino-acid sequence, 316 residues long: Probable cell division protein WhiA (316 aa).

Positions 275–309 (TLKELGEMVSSGKISKSGINHRLRKLDEIAEQLRS) form a DNA-binding region, H-T-H motif.

This sequence belongs to the WhiA family.

In terms of biological role, involved in cell division and chromosome segregation. This Bacillus licheniformis (strain ATCC 14580 / DSM 13 / JCM 2505 / CCUG 7422 / NBRC 12200 / NCIMB 9375 / NCTC 10341 / NRRL NRS-1264 / Gibson 46) protein is Probable cell division protein WhiA.